We begin with the raw amino-acid sequence, 269 residues long: Pertussis toxin subunit 1 (269 aa).

Positions 1–34 are cleaved as a signal peptide; it reads MRCTRAIRQTARTGWLTWLAILAVTAPVTSPAWA. NAD(+) is bound at residue Trp-60. Catalysis depends on residues His-69 and Glu-163. A disulfide bond links Cys-75 and Cys-235.

The protein belongs to the bacterial exotoxin subunit A family. As to quaternary structure, pertussis toxin contains five different chains, S1-S5. They are organized into 2 functional subunits: A, composed of S1 (which is toxic) and B, containing S2, S3, S5, and two copies of S4 (B binds to the membrane receptors). Dimers of S2-S4 and S3-S4 are held together by S5.

It is found in the secreted. Functionally, S1 is an NAD-dependent ADP-ribosyltransferase, which plays a crucial role in the pathogenesis of B.pertussis causing disruption of normal host cellular regulation. It catalyzes the ADP-ribosylation of a cysteine in the alpha subunit of host heterotrimeric G proteins. In the absence of G proteins it also catalyzes the cleavage of NAD(+) into ADP-ribose and nicotinamide. It irreversibly uncouples the G-alpha GTP-binding proteins from their membrane receptors. In Bordetella pertussis (strain Tohama I / ATCC BAA-589 / NCTC 13251), this protein is Pertussis toxin subunit 1 (ptxA).